A 269-amino-acid chain; its full sequence is Eukaryotic translation initiation factor 3 subunit G-1 (269 aa).

The RRM domain occupies 188–266 (AAIRISNLSE…LILSVEWSKP (79 aa)).

This sequence belongs to the eIF-3 subunit G family. Component of the eukaryotic translation initiation factor 3 (eIF-3) complex. The eIF-3 complex interacts with pix.

Its subcellular location is the cytoplasm. Functionally, RNA-binding component of the eukaryotic translation initiation factor 3 (eIF-3) complex, which is involved in protein synthesis of a specialized repertoire of mRNAs and, together with other initiation factors, stimulates binding of mRNA and methionyl-tRNAi to the 40S ribosome. The eIF-3 complex specifically targets and initiates translation of a subset of mRNAs involved in cell proliferation. This subunit can bind 18S rRNA. The polypeptide is Eukaryotic translation initiation factor 3 subunit G-1 (Drosophila sechellia (Fruit fly)).